We begin with the raw amino-acid sequence, 464 residues long: GDNF family receptor alpha-2 (464 aa).

The signal sequence occupies residues Met1–Ala21. 14 disulfides stabilise this stretch: Cys40/Cys93, Cys47/Cys53, Cys63/Cys78, Cys95/Cys105, Cys161/Cys222, Cys168/Cys174, Cys185/Cys200, Cys195/Cys241, Cys224/Cys229, Cys251/Cys323, Cys258/Cys264, Cys275/Cys293, Cys285/Cys347, and Cys325/Cys335. N-linked (GlcNAc...) asparagine glycosylation is present at Asn52. Residues Asn357 and Asn413 are each glycosylated (N-linked (GlcNAc...) asparagine). Ser444 carries GPI-anchor amidated serine lipidation. Positions Arg445 to Leu464 are cleaved as a propeptide — removed in mature form.

Belongs to the GDNFR family. Interacts with NRTN ligand and RET: forms a 2:2:2 ternary complex composed of NRTN ligand, GFRA2 and RET receptor. Also forms a 4:4:4 tetrameric complex composed of 4 copies of NRTN ligand, GFRA2 and RET receptor, which prevents endocytosis of RET. Interacts with SORL1.

It localises to the cell membrane. Functionally, receptor for neurturin (NRTN), a growth factor that supports the survival of sympathetic neurons. NRTN-binding leads to autophosphorylation and activation of the RET receptor. Also able to mediate GDNF signaling through the RET tyrosine kinase receptor. The protein is GDNF family receptor alpha-2 (GFRA2) of Pongo abelii (Sumatran orangutan).